Consider the following 216-residue polypeptide: Imidazoleglycerol-phosphate dehydratase (216 aa).

The residue at position 211 (Ser-211) is a Phosphoserine.

It belongs to the imidazoleglycerol-phosphate dehydratase family.

The enzyme catalyses D-erythro-1-(imidazol-4-yl)glycerol 3-phosphate = 3-(imidazol-4-yl)-2-oxopropyl phosphate + H2O. Its pathway is amino-acid biosynthesis; L-histidine biosynthesis; L-histidine from 5-phospho-alpha-D-ribose 1-diphosphate: step 6/9. This is Imidazoleglycerol-phosphate dehydratase (his5) from Schizosaccharomyces pombe (strain 972 / ATCC 24843) (Fission yeast).